Here is a 79-residue protein sequence, read N- to C-terminus: Acyl carrier protein (79 aa).

Positions 2–77 constitute a Carrier domain; that stretch reads SDIEARVKKI…LAIDYAKNNV (76 aa). S37 carries the O-(pantetheine 4'-phosphoryl)serine modification.

It belongs to the acyl carrier protein (ACP) family. 4'-phosphopantetheine is transferred from CoA to a specific serine of apo-ACP by AcpS. This modification is essential for activity because fatty acids are bound in thioester linkage to the sulfhydryl of the prosthetic group.

Its subcellular location is the cytoplasm. It participates in lipid metabolism; fatty acid biosynthesis. Its function is as follows. Carrier of the growing fatty acid chain in fatty acid biosynthesis. The sequence is that of Acyl carrier protein from Leptothrix cholodnii (strain ATCC 51168 / LMG 8142 / SP-6) (Leptothrix discophora (strain SP-6)).